Consider the following 163-residue polypeptide: ATP synthase subunit b 1 (163 aa).

The chain crosses the membrane as a helical span at residues 5-25 (LDATFFAFVGLVLFLALVVYL).

The protein belongs to the ATPase B chain family. In terms of assembly, F-type ATPases have 2 components, F(1) - the catalytic core - and F(0) - the membrane proton channel. F(1) has five subunits: alpha(3), beta(3), gamma(1), delta(1), epsilon(1). F(0) has three main subunits: a(1), b(2) and c(10-14). The alpha and beta chains form an alternating ring which encloses part of the gamma chain. F(1) is attached to F(0) by a central stalk formed by the gamma and epsilon chains, while a peripheral stalk is formed by the delta and b chains.

The protein resides in the cell inner membrane. F(1)F(0) ATP synthase produces ATP from ADP in the presence of a proton or sodium gradient. F-type ATPases consist of two structural domains, F(1) containing the extramembraneous catalytic core and F(0) containing the membrane proton channel, linked together by a central stalk and a peripheral stalk. During catalysis, ATP synthesis in the catalytic domain of F(1) is coupled via a rotary mechanism of the central stalk subunits to proton translocation. Functionally, component of the F(0) channel, it forms part of the peripheral stalk, linking F(1) to F(0). The polypeptide is ATP synthase subunit b 1 (Rhizobium etli (strain CIAT 652)).